Consider the following 395-residue polypeptide: Multidrug resistance protein MdtL (395 aa).

12 consecutive transmembrane segments (helical) span residues 4-24 (FLLCSFALVLLYPAGIDMYLV), 42-62 (IAFSVYLAGMATAMLFAGKIA), 69-89 (PVAIVGALVFMMASLLCSRAS), 93-113 (LFLSGRFLQGVGAGGCYVVAF), 131-151 (LLNGITCIVPVLAPVVGHLIM), 158-178 (SLFYTMSAMGIIVGLLSLFIL), 217-237 (VSVILTFVNASPVLLMEVMGF), 247-267 (ALTAGVSMVVSFSTPFALGLF), 271-291 (TLMLVSQGLFLTAGVTLSLAH), 295-315 (VTLFGLTLICAGFSVGFGVAM), 333-353 (LGIAQVCGSSLWIWLAAILGI), and 358-378 (MLIGILIGCSIVSILLIFSVA).

It belongs to the major facilitator superfamily. DHA1 family. MdtL (TC 2.A.1.2.22) subfamily.

The protein localises to the cell inner membrane. The sequence is that of Multidrug resistance protein MdtL from Salmonella agona (strain SL483).